The primary structure comprises 76 residues: COMM domain-containing protein 6 (76 aa).

Residues 9 to 76 (KLVDFQWKLG…KDMSNMIETL (68 aa)) enclose the COMM domain.

It belongs to the COMM domain-containing protein 6 family. As to quaternary structure, component of the commander complex consisting of the CCC subcomplex and the retriever subcomplex. Component of the CCC subcomplex.

In terms of biological role, scaffold protein in the commander complex that is essential for endosomal recycling of transmembrane cargos; the commander complex is composed of the CCC subcomplex and the retriever subcomplex. The chain is COMM domain-containing protein 6 (commd6) from Dictyostelium discoideum (Social amoeba).